The primary structure comprises 360 residues: POU domain, class 5, transcription factor 1 (360 aa).

Disordered regions lie at residues Met-1–Gly-52 and Gly-88–Pro-114. Residues His-4–Ser-12 carry the 9aaTAD motif. Residue Ser-111 is modified to Phosphoserine; by MAPK. A Glycyl lysine isopeptide (Lys-Gly) (interchain with G-Cter in SUMO) cross-link involves residue Lys-123. The 75-residue stretch at Asp-138–Asp-212 folds into the POU-specific domain. The DNA site is built by Arg-157 and Gln-164. DNA-binding regions lie at residues Ser-180–Arg-186 and Ser-193–Asn-196. The homeobox DNA-binding region spans Arg-230–Ser-289. Thr-235 bears the Phosphothreonine mark. Phosphoserine is present on residues Ser-236, Ser-289, Ser-290, and Ser-355.

This sequence belongs to the POU transcription factor family. Class-5 subfamily. Interacts with PKM. Interacts with WWP2. Interacts with UBE2I and ZSCAN10. Interacts with PCGF1. Interacts with ESRRB; recruits ESRRB near the POU5F1-SOX2 element in the NANOG proximal promoter; the interaction is DNA independent. Interacts with ZNF322. Interacts with MAPK8 and MAPK9; the interaction allows MAPK8 and MAPK9 to phosphorylate POU5F1 on Ser-355. Interacts (when phosphorylated on Ser-355) with FBXW8. Interacts with FBXW4. Interacts with SOX2 and SOX15; binds synergistically with either SOX2 or SOX15 to DNA. Interacts with DDX56. In terms of processing, sumoylation enhances the protein stability, DNA binding and transactivation activity. Sumoylation is required for enhanced YES1 expression. Post-translationally, ubiquitinated; undergoes 'Lys-63'-linked polyubiquitination by WWP2 leading to proteasomal degradation. ERK1/2-mediated phosphorylation at Ser-111 promotes nuclear exclusion and proteasomal degradation. Phosphorylation at Thr-235 and Ser-236 decrease DNA-binding and alters ability to activate transcription. Expressed in developing brain. Highest levels found in specific cell layers of the cortex, the olfactory bulb, the hippocampus and the cerebellum. Low levels of expression in adult tissues.

It localises to the cytoplasm. Its subcellular location is the nucleus. Transcription factor that binds to the octamer motif (5'-ATTTGCAT-3'). Forms a trimeric complex with SOX2 or SOX15 on DNA and controls the expression of a number of genes involved in embryonic development such as YES1, FGF4, UTF1 and ZFP206. Critical for early embryogenesis and for embryonic stem cell pluripotency. The sequence is that of POU domain, class 5, transcription factor 1 (POU5F1) from Homo sapiens (Human).